A 419-amino-acid polypeptide reads, in one-letter code: Gamma-glutamyl phosphate reductase (419 aa).

Belongs to the gamma-glutamyl phosphate reductase family.

The protein localises to the cytoplasm. It catalyses the reaction L-glutamate 5-semialdehyde + phosphate + NADP(+) = L-glutamyl 5-phosphate + NADPH + H(+). Its pathway is amino-acid biosynthesis; L-proline biosynthesis; L-glutamate 5-semialdehyde from L-glutamate: step 2/2. Catalyzes the NADPH-dependent reduction of L-glutamate 5-phosphate into L-glutamate 5-semialdehyde and phosphate. The product spontaneously undergoes cyclization to form 1-pyrroline-5-carboxylate. The chain is Gamma-glutamyl phosphate reductase from Mannheimia succiniciproducens (strain KCTC 0769BP / MBEL55E).